Here is a 522-residue protein sequence, read N- to C-terminus: Sterol O-acyltransferase 2 (522 aa).

2 disordered regions span residues 1-36 (MEPGGARLRLQRTEGLGGERERQPCGDGNTETHRAP) and 74-96 (SYPSQDKPLPPPPPGSLSRTQEP). The Cytoplasmic segment spans residues 1–120 (MEPGGARLRL…LDELMEVQHF (120 aa)). The span at 17 to 36 (GGERERQPCGDGNTETHRAP) shows a compositional bias: basic and acidic residues. His119 is a cholesterol binding site. A helical transmembrane segment spans residues 121 to 142 (RTIYHMFIAGLCVFIISTLAID). At 143–162 (FIDEGRLLLEFDLLIFSFGQ) the chain is on the lumenal side. The chain crosses the membrane as a helical span at residues 163–188 (LPLALVTWVPMFLSTLLAPYQALRLW). At 189-196 (ARGTWTQA) the chain is on the cytoplasmic side. Residues 197–220 (TGLGCALLAAHAVVLCALPVHVAV) traverse the membrane as a helical segment. Topologically, residues 221 to 228 (EHQLPPAS) are lumenal. Residues 229 to 252 (RCVLVFEQVRFLMKSYSFLREAVP) traverse the membrane as a helical segment. The Cytoplasmic segment spans residues 253–293 (GTLRARRGEGIQAPSFSSYLYFLFCPTLIYRETYPRTPYVR). Cys277 carries the cysteine sulfenic acid (-SOH); alternate modification. A Glycyl cysteine thioester (Cys-Gly) (interchain with G-Cter in ubiquitin); alternate cross-link involves residue Cys277. The helical transmembrane segment at 294-326 (WNYVAKNFAQALGCVLYACFILGRLCVPVFANM) threads the bilayer. Over 327 to 343 (SREPFSTRALVLSILHA) the chain is Lumenal. The chain crosses the membrane as a helical span at residues 344-369 (TLPGIFMLLLIFFAFLHCWLNAFAEM). Topologically, residues 370-417 (LRFGDRMFYRDWWNSTSFSNYYRTWNVVVHDWLYSYVYQDGLRLLGAR) are cytoplasmic. The FYXDWWN motif motif lies at 377 to 383 (FYRDWWN). Asn389, Arg392, Asn395, His399, Tyr407, and Ser430 together coordinate an acyl-CoA. Residues 418–442 (ARGVAMLGVFLVSAVAHEYIFCFVL) form a helical membrane-spanning segment. Residue His434 is part of the active site. Topologically, residues 443–448 (GFFYPV) are lumenal. A helical membrane pass occupies residues 449–464 (MLILFLVIGGMLNFMM). Residues 465 to 470 (HDQRTG) lie on the Cytoplasmic side of the membrane. The chain crosses the membrane as a helical span at residues 471–502 (PAWNVLMWTMLFLGQGIQVSLYCQEWYARRHC). Residues 503–522 (PLPQATFWGLVTPRSWSCHT) are Lumenal-facing.

The protein belongs to the membrane-bound acyltransferase family. Sterol o-acyltransferase subfamily. In terms of assembly, may form homo- or heterodimers. Interacts with INSIG1; the interaction is direct and promotes association with AMFR/gp78. Post-translationally, polyubiquitinated by AMFR/gp78 at Cys-277, leading to its degradation when the lipid levels are low. Association with AMFR/gp78 is mediated via interaction with INSIG1. High concentration of cholesterol and fatty acid results in Cys-277 oxidation, preventing ubiquitination at the same site, resulting in protein stabilization. In terms of processing, oxidized at Cys-277: high concentration of cholesterol and fatty acid induce reactive oxygen species, which oxidizes Cys-277, preventing ubiquitination at the same site, and resulting in protein stabilization. In terms of tissue distribution, expression seems confined in hepatocytes and enterocytes.

The protein resides in the endoplasmic reticulum membrane. It carries out the reaction a sterol + a long-chain fatty acyl-CoA = a long-chain 3-hydroxysterol ester + CoA. The catalysed reaction is cholesterol + an acyl-CoA = a cholesterol ester + CoA. The enzyme catalyses cholesterol + (9Z)-octadecenoyl-CoA = cholesteryl (9Z-octadecenoate) + CoA. It catalyses the reaction (5Z,8Z,11Z,14Z,17Z)-eicosapentaenoyl-CoA + cholesterol = (5Z,8Z,11Z,14Z,17Z-eicosapentaenoyl)-cholesterol + CoA. It carries out the reaction (9Z,12Z,15Z)-octadecatrienoyl-CoA + cholesterol = (9Z,12Z,15Z-octadecatrienoyl)-cholesterol + CoA. The catalysed reaction is (5Z,8Z,11Z,14Z)-eicosatetraenoyl-CoA + cholesterol = cholesteryl (5Z,8Z,11Z,14Z)-eicosatetraenoate + CoA. Functionally, catalyzes the formation of fatty acid-cholesterol esters, which are less soluble in membranes than cholesterol. Plays a role in lipoprotein assembly and dietary cholesterol absorption. Utilizes oleoyl-CoA ((9Z)-octadecenoyl-CoA) and linolenoyl-CoA ((9Z,12Z,15Z)-octadecatrienoyl-CoA) as substrates. May provide cholesteryl esters for lipoprotein secretion from hepatocytes and intestinal mucosa. Its function is as follows. Has lower enzymatic activity compared to isoform 1. The protein is Sterol O-acyltransferase 2 of Homo sapiens (Human).